A 448-amino-acid polypeptide reads, in one-letter code: Cysteine--tRNA ligase (448 aa).

Cys-27 contributes to the Zn(2+) binding site. Positions 29–39 match the 'HIGH' region motif; it reads PTVYNYIHVGN. Zn(2+) contacts are provided by Cys-210, His-235, and Glu-239. The short motif at 267–271 is the 'KMSKS' region element; that stretch reads KMSKS. Lys-270 serves as a coordination point for ATP.

The protein belongs to the class-I aminoacyl-tRNA synthetase family. In terms of assembly, monomer. It depends on Zn(2+) as a cofactor.

It localises to the cytoplasm. The enzyme catalyses tRNA(Cys) + L-cysteine + ATP = L-cysteinyl-tRNA(Cys) + AMP + diphosphate. The sequence is that of Cysteine--tRNA ligase from Lactococcus lactis subsp. lactis (strain IL1403) (Streptococcus lactis).